The sequence spans 898 residues: Serine/threonine-protein kinase TAO3 (898 aa).

A Protein kinase domain is found at 24–277 (FIDLHEIGHG…AVELLRHDFI (254 aa)). Residues 30 to 38 (IGHGSFGAV) and Lys-53 contribute to the ATP site. Asp-147 serves as the catalytic Proton acceptor. Disordered stretches follow at residues 316 to 375 (TRNG…DESS) and 405 to 424 (DEAGHGDPRPEPRPTQSVQS). The residue at position 324 (Ser-324) is a Phosphoserine; by ATM. Residues Ser-343, Ser-346, and Ser-349 each carry the phosphoserine modification. The segment covering 349–366 (SIPSTSVSTGSRSSSVNS) has biased composition (low complexity). Residue Thr-357 is modified to Phosphothreonine. At Ser-359 the chain carries Phosphoserine. Basic and acidic residues predominate over residues 405-416 (DEAGHGDPRPEP). The residue at position 442 (Ser-442) is a Phosphoserine. 3 coiled-coil regions span residues 452–502 (EQEN…THAN), 548–649 (FLES…HAML), and 754–871 (LKTL…QERE). Residues 565 to 596 (EEMNEDHSTPKKEKQERISKHKENLQHTQAEE) are disordered. Residue Lys-830 is modified to N6-acetyllysine.

This sequence belongs to the protein kinase superfamily. STE Ser/Thr protein kinase family. STE20 subfamily. As to quaternary structure, self-associates. Interacts with ERN1 and TRAF2. Interaction with TRAF2 is facilitated under ER stress conditions, such as treatment with tunicamycin, and may promote TRAF2 phosphorylation. Interacts (via N-terminus) with STK25; the interaction promotes STK25 abundance at the level of protein expression and/or stability. Post-translationally, autophosphorylated. Phosphorylation at Ser-324 by ATM following DNA damage is required for activation of the p38/MAPK14 stress-activated MAPK cascade. Phosphorylated at Ser-324 and on Tyr residues during T cell activation. Phosphorylated by LRRK2.

The protein resides in the cytoplasm. The protein localises to the cell membrane. It localises to the membrane raft. Its subcellular location is the lipid droplet. The catalysed reaction is L-seryl-[protein] + ATP = O-phospho-L-seryl-[protein] + ADP + H(+). The enzyme catalyses L-threonyl-[protein] + ATP = O-phospho-L-threonyl-[protein] + ADP + H(+). Serine/threonine-protein kinase that acts as a regulator of the p38/MAPK14 stress-activated MAPK cascade and of the MAPK8/JNK cascade. In response to DNA damage, involved in the G2/M transition DNA damage checkpoint by activating the p38/MAPK14 stress-activated MAPK cascade, probably by mediating phosphorylation of upstream MAP2K3 and MAP2K6 kinases. Inhibits basal activity of the MAPK8/JNK cascade and diminishes its activation in response to epidermal growth factor (EGF). Positively regulates canonical T cell receptor (TCR) signaling by preventing early PTPN6/SHP1-mediated inactivation of LCK, ensuring sustained TCR signaling that is required for optimal activation and differentiation of T cells. Phosphorylates PTPN6/SHP1 on 'Thr-394', leading to its polyubiquitination and subsequent proteasomal degradation. Required for cell surface expression of metalloprotease ADAM10 on type 1 transitional B cells which is necessary for their NOTCH-mediated development into marginal zone B cells. Also required for the NOTCH-mediated terminal differentiation of splenic conventional type 2 dendritic cells. Positively regulates osteoblast differentiation by acting as an upstream activator of the JNK pathway. Promotes JNK signaling in hepatocytes and positively regulates hepatocyte lipid storage by inhibiting beta-oxidation and triacylglycerol secretion while enhancing lipid synthesis. Restricts age-associated inflammation by negatively regulating differentiation of macrophages and their production of pro-inflammatory cytokines. Plays a role in negatively regulating the abundance of regulatory T cells in white adipose tissue. This is Serine/threonine-protein kinase TAO3 (Taok3) from Mus musculus (Mouse).